A 150-amino-acid polypeptide reads, in one-letter code: MTFRLIAENRKARFNYEIIEKIEAGIVLQGTEVKSIRAGKMTLADSYAVVNREELYWLNGQIAHYEHGNIHNHEPFRSRKLLLRHKEISRLIGLVKEKGLSIIPLRAYWKGSKVKLELGIAKGKKLYDKRATTKERDWQREKQRILKTNH.

Belongs to the SmpB family.

The protein resides in the cytoplasm. In terms of biological role, required for rescue of stalled ribosomes mediated by trans-translation. Binds to transfer-messenger RNA (tmRNA), required for stable association of tmRNA with ribosomes. tmRNA and SmpB together mimic tRNA shape, replacing the anticodon stem-loop with SmpB. tmRNA is encoded by the ssrA gene; the 2 termini fold to resemble tRNA(Ala) and it encodes a 'tag peptide', a short internal open reading frame. During trans-translation Ala-aminoacylated tmRNA acts like a tRNA, entering the A-site of stalled ribosomes, displacing the stalled mRNA. The ribosome then switches to translate the ORF on the tmRNA; the nascent peptide is terminated with the 'tag peptide' encoded by the tmRNA and targeted for degradation. The ribosome is freed to recommence translation, which seems to be the essential function of trans-translation. The protein is SsrA-binding protein of Magnetococcus marinus (strain ATCC BAA-1437 / JCM 17883 / MC-1).